Reading from the N-terminus, the 332-residue chain is UPF0285 protein MK0078 (332 aa).

This sequence belongs to the UPF0285 family.

In Methanopyrus kandleri (strain AV19 / DSM 6324 / JCM 9639 / NBRC 100938), this protein is UPF0285 protein MK0078.